Here is a 117-residue protein sequence, read N- to C-terminus: Large ribosomal subunit protein bL20c (117 aa).

Belongs to the bacterial ribosomal protein bL20 family.

Its subcellular location is the plastid. It is found in the chloroplast. Its function is as follows. Binds directly to 23S ribosomal RNA and is necessary for the in vitro assembly process of the 50S ribosomal subunit. It is not involved in the protein synthesizing functions of that subunit. This Morus indica (Mulberry) protein is Large ribosomal subunit protein bL20c.